A 35-amino-acid chain; its full sequence is Defensin-B (35 aa).

3 disulfides stabilise this stretch: Cys4–Cys25, Cys10–Cys33, and Cys14–Cys35.

It is found in the secreted. Has antibacterial activity against M.luteus and E.coli. This is Defensin-B from Mytilus edulis (Blue mussel).